Reading from the N-terminus, the 275-residue chain is Dermonecrotic toxin SpeSicTox-betaIIA2i (275 aa).

His5 is an active-site residue. Mg(2+)-binding residues include Glu25 and Asp27. His41 functions as the Nucleophile in the catalytic mechanism. Disulfide bonds link Cys45–Cys51 and Cys47–Cys190. Residue Asp85 participates in Mg(2+) binding.

This sequence belongs to the arthropod phospholipase D family. Class II subfamily. Mg(2+) is required as a cofactor. As to expression, expressed by the venom gland.

It localises to the secreted. The enzyme catalyses an N-(acyl)-sphingosylphosphocholine = an N-(acyl)-sphingosyl-1,3-cyclic phosphate + choline. It catalyses the reaction an N-(acyl)-sphingosylphosphoethanolamine = an N-(acyl)-sphingosyl-1,3-cyclic phosphate + ethanolamine. The catalysed reaction is a 1-acyl-sn-glycero-3-phosphocholine = a 1-acyl-sn-glycero-2,3-cyclic phosphate + choline. It carries out the reaction a 1-acyl-sn-glycero-3-phosphoethanolamine = a 1-acyl-sn-glycero-2,3-cyclic phosphate + ethanolamine. Functionally, dermonecrotic toxins cleave the phosphodiester linkage between the phosphate and headgroup of certain phospholipids (sphingolipid and lysolipid substrates), forming an alcohol (often choline) and a cyclic phosphate. This toxin acts on sphingomyelin (SM). It may also act on ceramide phosphoethanolamine (CPE), lysophosphatidylcholine (LPC) and lysophosphatidylethanolamine (LPE), but not on lysophosphatidylserine (LPS), and lysophosphatidylglycerol (LPG). It acts by transphosphatidylation, releasing exclusively cyclic phosphate products as second products. Induces dermonecrosis, hemolysis, increased vascular permeability, edema, inflammatory response, and platelet aggregation. The sequence is that of Dermonecrotic toxin SpeSicTox-betaIIA2i from Sicarius peruensis (Six-eyed sand spider).